A 469-amino-acid chain; its full sequence is 3-isopropylmalate dehydratase large subunit (469 aa).

Cys349, Cys409, and Cys412 together coordinate [4Fe-4S] cluster.

The protein belongs to the aconitase/IPM isomerase family. LeuC type 1 subfamily. Heterodimer of LeuC and LeuD. Requires [4Fe-4S] cluster as cofactor.

It catalyses the reaction (2R,3S)-3-isopropylmalate = (2S)-2-isopropylmalate. It participates in amino-acid biosynthesis; L-leucine biosynthesis; L-leucine from 3-methyl-2-oxobutanoate: step 2/4. Catalyzes the isomerization between 2-isopropylmalate and 3-isopropylmalate, via the formation of 2-isopropylmaleate. The protein is 3-isopropylmalate dehydratase large subunit of Methylorubrum extorquens (strain CM4 / NCIMB 13688) (Methylobacterium extorquens).